The primary structure comprises 78 residues: Translational regulator CsrA (78 aa).

This sequence belongs to the CsrA/RsmA family. As to quaternary structure, homodimer; the beta-strands of each monomer intercalate to form a hydrophobic core, while the alpha-helices form wings that extend away from the core.

The protein resides in the cytoplasm. A translational regulator that binds mRNA to regulate translation initiation and/or mRNA stability. Usually binds in the 5'-UTR at or near the Shine-Dalgarno sequence preventing ribosome-binding, thus repressing translation. Its main target seems to be the major flagellin gene, while its function is anatagonized by FliW. The chain is Translational regulator CsrA from Caldicellulosiruptor bescii (strain ATCC BAA-1888 / DSM 6725 / KCTC 15123 / Z-1320) (Anaerocellum thermophilum).